The sequence spans 463 residues: Asparagine--tRNA ligase (463 aa).

The protein belongs to the class-II aminoacyl-tRNA synthetase family. In terms of assembly, homodimer.

The protein localises to the cytoplasm. The catalysed reaction is tRNA(Asn) + L-asparagine + ATP = L-asparaginyl-tRNA(Asn) + AMP + diphosphate + H(+). This chain is Asparagine--tRNA ligase, found in Bacillus cereus (strain ZK / E33L).